The primary structure comprises 433 residues: tRNA(Ile)-lysidine synthase (433 aa).

An ATP-binding site is contributed by 37–42 (SGGKDS).

This sequence belongs to the tRNA(Ile)-lysidine synthase family.

Its subcellular location is the cytoplasm. It catalyses the reaction cytidine(34) in tRNA(Ile2) + L-lysine + ATP = lysidine(34) in tRNA(Ile2) + AMP + diphosphate + H(+). Ligates lysine onto the cytidine present at position 34 of the AUA codon-specific tRNA(Ile) that contains the anticodon CAU, in an ATP-dependent manner. Cytidine is converted to lysidine, thus changing the amino acid specificity of the tRNA from methionine to isoleucine. The protein is tRNA(Ile)-lysidine synthase of Leptospira interrogans serogroup Icterohaemorrhagiae serovar Lai (strain 56601).